The chain runs to 276 residues: Mitochondrial outer membrane protein porin 2 (276 aa).

Ser76 carries the phosphoserine modification. Thr236 is modified (phosphothreonine).

This sequence belongs to the eukaryotic mitochondrial porin (TC 1.B.8.1) family. Expressed in root tips, steles, leaves, sepals, petals, stamen and pistils.

The protein resides in the mitochondrion outer membrane. Its function is as follows. Forms a channel through the mitochondrial outer membrane that allows diffusion of small hydrophilic molecules. The channel adopts an open conformation at low or zero membrane potential and a closed conformation at potentials above 30-40 mV. The open state has a weak anion selectivity whereas the closed state is cation-selective. Involved in plant growth and development at the vegetative and reproductive stages. Is important for leaf and pollen development and mitochondrial membrane potential steady state. May be involved in ABA-mediated early seedling development and disease resistance. This is Mitochondrial outer membrane protein porin 2 (VDAC2) from Arabidopsis thaliana (Mouse-ear cress).